The sequence spans 502 residues: C2H2-type transcription factor MSN2 (502 aa).

2 consecutive C2H2-type zinc fingers follow at residues 385–408 (FVCH…RSLH) and 414–436 (FACG…SRIH).

Its subcellular location is the nucleus. In terms of biological role, key downstream transcription factor in the HOG1-MAPK pathway. Plays crucial roles in the regulation of growth, conidiation, trap development and fatty acid metabolism. Negatively regulates secondary metabolism such as arthrobotrisins biosynthesis.Also regulates autophagy and endocytosis. The polypeptide is C2H2-type transcription factor MSN2 (Arthrobotrys oligospora (strain ATCC 24927 / CBS 115.81 / DSM 1491) (Nematode-trapping fungus)).